A 335-amino-acid polypeptide reads, in one-letter code: Biotin synthase (335 aa).

One can recognise a Radical SAM core domain in the interval 51–281 (YRVQLASLLS…RSRVRLSAGR (231 aa)). Residues Cys66, Cys70, and Cys73 each contribute to the [4Fe-4S] cluster site. Residues Cys112, Cys144, Cys204, and Arg276 each coordinate [2Fe-2S] cluster.

The protein belongs to the radical SAM superfamily. Biotin synthase family. Homodimer. [4Fe-4S] cluster is required as a cofactor. It depends on [2Fe-2S] cluster as a cofactor.

The enzyme catalyses (4R,5S)-dethiobiotin + (sulfur carrier)-SH + 2 reduced [2Fe-2S]-[ferredoxin] + 2 S-adenosyl-L-methionine = (sulfur carrier)-H + biotin + 2 5'-deoxyadenosine + 2 L-methionine + 2 oxidized [2Fe-2S]-[ferredoxin]. The protein operates within cofactor biosynthesis; biotin biosynthesis; biotin from 7,8-diaminononanoate: step 2/2. Catalyzes the conversion of dethiobiotin (DTB) to biotin by the insertion of a sulfur atom into dethiobiotin via a radical-based mechanism. The polypeptide is Biotin synthase (Prochlorococcus marinus (strain MIT 9303)).